A 102-amino-acid chain; its full sequence is uncharacterized protein (102 aa).

The tract at residues 77-102 is disordered; it reads RKDGDEKSKPNSKDYASRPIRDHSKI.

This is an uncharacterized protein from Microplitis demolitor (Parasitoid wasp).